The sequence spans 335 residues: MPIRHCIVHLIDKKPDGSPAVLHARDSELAASDAIENLLADLNDSYNAKQGKAWGFFHGESGAYPLSGWLKQYLDEEKDFTAFSRVAVEHLQKLMEESNLSTGGHILFAHYQQGMTEYLAIALLHHSEGVAVNAQLDVTPSRHLDLGQLHLAARINLSEWKNNQNSRQYISFIKGKNGKKVSDYFRDFIGCQEGVDGPGETRTLLKAFSDFVESEDLPEESAREKTQTLVEYATTQTKLGEPVTLEELSSLIDEDRPKAFYDHIRNKDYGLSPEIPADKRTLNQFRRFTGRAEGLSISFEAHLLGDKVEYDEAAGTLIIKGLPTTLVDQLKRRKD.

It belongs to the YejK family.

It is found in the cytoplasm. The protein localises to the nucleoid. This is Nucleoid-associated protein PP_0973 from Pseudomonas putida (strain ATCC 47054 / DSM 6125 / CFBP 8728 / NCIMB 11950 / KT2440).